The sequence spans 311 residues: Cytosolic Fe-S cluster assembly factor Nubp1 homolog (311 aa).

Cys-9, Cys-23, Cys-26, and Cys-32 together coordinate [4Fe-4S] cluster. An ATP-binding site is contributed by 63–70 (GKGGVGKS). [4Fe-4S] cluster contacts are provided by Cys-240 and Cys-243.

The protein belongs to the Mrp/NBP35 ATP-binding proteins family. NUBP1/NBP35 subfamily. In terms of assembly, heterotetramer of 2 Nubp1 and 2 Nubp2 chains. [4Fe-4S] cluster is required as a cofactor.

It localises to the cytoplasm. In terms of biological role, component of the cytosolic iron-sulfur (Fe/S) protein assembly (CIA) machinery. Required for maturation of extramitochondrial Fe-S proteins. The Nubp1-Nubp2 heterotetramer forms a Fe-S scaffold complex, mediating the de novo assembly of an Fe-S cluster and its transfer to target apoproteins. The protein is Cytosolic Fe-S cluster assembly factor Nubp1 homolog of Drosophila pseudoobscura pseudoobscura (Fruit fly).